A 283-amino-acid polypeptide reads, in one-letter code: Bifunctional protein FolD (283 aa).

Residue 166 to 168 (GAS) participates in NADP(+) binding.

The protein belongs to the tetrahydrofolate dehydrogenase/cyclohydrolase family. As to quaternary structure, homodimer.

The catalysed reaction is (6R)-5,10-methylene-5,6,7,8-tetrahydrofolate + NADP(+) = (6R)-5,10-methenyltetrahydrofolate + NADPH. It catalyses the reaction (6R)-5,10-methenyltetrahydrofolate + H2O = (6R)-10-formyltetrahydrofolate + H(+). It functions in the pathway one-carbon metabolism; tetrahydrofolate interconversion. In terms of biological role, catalyzes the oxidation of 5,10-methylenetetrahydrofolate to 5,10-methenyltetrahydrofolate and then the hydrolysis of 5,10-methenyltetrahydrofolate to 10-formyltetrahydrofolate. This Coxiella burnetii (strain CbuG_Q212) (Coxiella burnetii (strain Q212)) protein is Bifunctional protein FolD.